A 140-amino-acid polypeptide reads, in one-letter code: Phosphoribosyl-AMP cyclohydrolase (140 aa).

Residue aspartate 85 coordinates Mg(2+). Cysteine 86 is a Zn(2+) binding site. Positions 87 and 89 each coordinate Mg(2+). The Zn(2+) site is built by cysteine 102 and cysteine 109.

The protein belongs to the PRA-CH family. In terms of assembly, homodimer. Mg(2+) is required as a cofactor. It depends on Zn(2+) as a cofactor.

The protein resides in the cytoplasm. It catalyses the reaction 1-(5-phospho-beta-D-ribosyl)-5'-AMP + H2O = 1-(5-phospho-beta-D-ribosyl)-5-[(5-phospho-beta-D-ribosylamino)methylideneamino]imidazole-4-carboxamide. The protein operates within amino-acid biosynthesis; L-histidine biosynthesis; L-histidine from 5-phospho-alpha-D-ribose 1-diphosphate: step 3/9. In terms of biological role, catalyzes the hydrolysis of the adenine ring of phosphoribosyl-AMP. In Bradyrhizobium diazoefficiens (strain JCM 10833 / BCRC 13528 / IAM 13628 / NBRC 14792 / USDA 110), this protein is Phosphoribosyl-AMP cyclohydrolase.